The sequence spans 604 residues: Aspartate--tRNA(Asp/Asn) ligase (604 aa).

Glu187 is an L-aspartate binding site. The aspartate stretch occupies residues 211 to 214; sequence QQFK. L-aspartate is bound by residues Arg233 and His461. 233–235 provides a ligand contact to ATP; the sequence is RDE. ATP is bound at residue Glu495. Arg502 provides a ligand contact to L-aspartate. 547-550 is a binding site for ATP; the sequence is GLDR.

Belongs to the class-II aminoacyl-tRNA synthetase family. Type 1 subfamily. In terms of assembly, homodimer.

It localises to the cytoplasm. The catalysed reaction is tRNA(Asx) + L-aspartate + ATP = L-aspartyl-tRNA(Asx) + AMP + diphosphate. In terms of biological role, aspartyl-tRNA synthetase with relaxed tRNA specificity since it is able to aspartylate not only its cognate tRNA(Asp) but also tRNA(Asn). Reaction proceeds in two steps: L-aspartate is first activated by ATP to form Asp-AMP and then transferred to the acceptor end of tRNA(Asp/Asn). This is Aspartate--tRNA(Asp/Asn) ligase from Chlorobium luteolum (strain DSM 273 / BCRC 81028 / 2530) (Pelodictyon luteolum).